The following is a 226-amino-acid chain: MATTNNKNLTITEKVYVRVRLANEADISHIYKLFYQIHEYHNYTHLYKATESSLCDLLFKANPNPLFYGPSVLLLEVSPTPFENTKKDEKFKPVLKTFDLRATVEDKEAEEFKSKSCGDEKEDVFIAGYAFFYANYSCFYDKAGIYFESLYFRESYRKLGMGGLLFGTVASIAANNGFASVEGIVAVWNKKSYDFYVNMGVEIFDEFRYGKLVGDALQKYADKEKV.

The segment at 29-45 is important in binding site and for catalytic activity; that stretch reads HIYKLFYQIHEYHNYTH. Residues 72–222 enclose the N-acetyltransferase domain; it reads VLLLEVSPTP…VGDALQKYAD (151 aa).

This sequence belongs to the acetyltransferase family. As to quaternary structure, homodimer.

It localises to the cytoplasm. The enzyme catalyses tyramine + (E)-feruloyl-CoA = N-[(E)-feruloyl]tyramine + CoA + H(+). Its activity is regulated as follows. Inhibited by (2-hydroxyphenyl)amino sulfinyl acetic acid 1,1-dimethylethyl ester, by DEPC and by N-ethylmaleimide. Synthesizes amides which are involved in stress response in the cell wall. Catalyzes the synthesis of hydroxycinnamic acid amides from hydroxycinnamoyl-CoA thioesters and various hydroxyphenylethylamines such as 4-coumaroyl-CoA and sinapoyl-CoA. The sequence is that of Tyramine N-feruloyltransferase 10/30 (THT10) from Nicotiana tabacum (Common tobacco).